The primary structure comprises 398 residues: Acetate kinase (398 aa).

N9 contributes to the Mg(2+) binding site. Residue K16 participates in ATP binding. R93 contacts substrate. Residue D150 is the Proton donor/acceptor of the active site. ATP-binding positions include 209–213, 284–286, and 329–333; these read HLGAG, DMR, and GIGEH. A Mg(2+)-binding site is contributed by E382.

Belongs to the acetokinase family. In terms of assembly, homodimer. The cofactor is Mg(2+). Mn(2+) is required as a cofactor.

It localises to the cytoplasm. The catalysed reaction is acetate + ATP = acetyl phosphate + ADP. The protein operates within metabolic intermediate biosynthesis; acetyl-CoA biosynthesis; acetyl-CoA from acetate: step 1/2. Its function is as follows. Catalyzes the formation of acetyl phosphate from acetate and ATP. Can also catalyze the reverse reaction. In Rhodopseudomonas palustris (strain ATCC BAA-98 / CGA009), this protein is Acetate kinase.